The following is a 155-amino-acid chain: Peptide deformylase (155 aa).

Fe cation-binding residues include C88 and H130. E131 is a catalytic residue. Residue H134 participates in Fe cation binding.

It belongs to the polypeptide deformylase family. The cofactor is Fe(2+).

The enzyme catalyses N-terminal N-formyl-L-methionyl-[peptide] + H2O = N-terminal L-methionyl-[peptide] + formate. In terms of biological role, removes the formyl group from the N-terminal Met of newly synthesized proteins. Requires at least a dipeptide for an efficient rate of reaction. N-terminal L-methionine is a prerequisite for activity but the enzyme has broad specificity at other positions. This is Peptide deformylase from Pelotomaculum thermopropionicum (strain DSM 13744 / JCM 10971 / SI).